Consider the following 359-residue polypeptide: MATH domain and coiled-coil domain-containing protein At2g42475 (359 aa).

One can recognise an MATH domain in the interval 6-128 (KTSFTFEIEN…NDKLIITVEV (123 aa)). Residues 146-337 (EFKELQDLYN…NLELMVLDFK (192 aa)) adopt a coiled-coil conformation.

This chain is MATH domain and coiled-coil domain-containing protein At2g42475, found in Arabidopsis thaliana (Mouse-ear cress).